We begin with the raw amino-acid sequence, 441 residues long: Transcriptional regulatory protein ZraR (441 aa).

The region spanning 7-121 (DILVVDDDVS…RLQETLEKAL (115 aa)) is the Response regulatory domain. A 4-aspartylphosphate modification is found at aspartate 56. The Sigma-54 factor interaction domain maps to 141–370 (MIGSSPAMQH…LENAIERAVV (230 aa)). Glycine 172, threonine 173, arginine 329, and arginine 359 together coordinate ATP. Positions 421-440 (KTEAARQLGITRKTLLAKLS) form a DNA-binding region, H-T-H motif.

Phosphorylated by ZraS.

Its subcellular location is the cytoplasm. With respect to regulation, activity of the ZraS/ZraR two-component system is repressed by the zinc-bound form of ZraP, which probably interacts with the periplasmic region of ZraS. Part of the Zra signaling pathway, an envelope stress response (ESR) system composed of the periplasmic accessory protein ZraP, the histidine kinase ZraS and the transcriptional regulator ZraR. The ZraPSR system contributes to antibiotic resistance and is important for membrane integrity in the presence of membrane-targeting biocides. ZraR is a member of the two-component regulatory system ZraS/ZraR. When activated by ZraS, acts in conjunction with sigma-54 to regulate the expression of zraP in the presence of high Zn(2+) or Pb(2+) concentrations. Also positively autoregulates the expression of the zraSR operon. The protein is Transcriptional regulatory protein ZraR (zraR) of Salmonella typhi.